We begin with the raw amino-acid sequence, 370 residues long: DNA primase large subunit PriL (370 aa).

[4Fe-4S] cluster-binding residues include cysteine 230, cysteine 301, cysteine 310, and cysteine 317. The segment at 337–370 is disordered; the sequence is EGEEAQGKEQGKEKDDGKEKENGKESEVKKKKEK.

It belongs to the eukaryotic-type primase large subunit family. As to quaternary structure, heterodimer of a small subunit (PriS) and a large subunit (PriL). It depends on [4Fe-4S] cluster as a cofactor.

Its function is as follows. Regulatory subunit of DNA primase, an RNA polymerase that catalyzes the synthesis of short RNA molecules used as primers for DNA polymerase during DNA replication. Stabilizes and modulates the activity of the small subunit, increasing the rate of DNA synthesis, and conferring RNA synthesis capability. The DNA polymerase activity may enable DNA primase to also catalyze primer extension after primer synthesis. May also play a role in DNA repair. This is DNA primase large subunit PriL from Methanosarcina mazei (strain ATCC BAA-159 / DSM 3647 / Goe1 / Go1 / JCM 11833 / OCM 88) (Methanosarcina frisia).